Reading from the N-terminus, the 377-residue chain is Chaperone protein DnaJ (377 aa).

The region spanning 5-70 is the J domain; the sequence is DYYEILGVSR…QKRAAYDQYG (66 aa). Residues 132 to 210 form a CR-type zinc finger; sequence GVTKEIRIPT…CHGHGRIEKS (79 aa). Positions 145, 148, 162, 165, 184, 187, 198, and 201 each coordinate Zn(2+). CXXCXGXG motif repeat units lie at residues 145 to 152, 162 to 169, 184 to 191, and 198 to 205; these read CDVCHGSG, CPTCHGAG, CPHCHGRG, and CNKCHGHG.

This sequence belongs to the DnaJ family. Homodimer. It depends on Zn(2+) as a cofactor.

The protein resides in the cytoplasm. Its function is as follows. Participates actively in the response to hyperosmotic and heat shock by preventing the aggregation of stress-denatured proteins and by disaggregating proteins, also in an autonomous, DnaK-independent fashion. Unfolded proteins bind initially to DnaJ; upon interaction with the DnaJ-bound protein, DnaK hydrolyzes its bound ATP, resulting in the formation of a stable complex. GrpE releases ADP from DnaK; ATP binding to DnaK triggers the release of the substrate protein, thus completing the reaction cycle. Several rounds of ATP-dependent interactions between DnaJ, DnaK and GrpE are required for fully efficient folding. Also involved, together with DnaK and GrpE, in the DNA replication of plasmids through activation of initiation proteins. This chain is Chaperone protein DnaJ, found in Edwardsiella ictaluri (strain 93-146).